A 317-amino-acid chain; its full sequence is Ribosomal protein L11 methyltransferase (317 aa).

Positions 158, 179, 201, and 244 each coordinate S-adenosyl-L-methionine.

The protein belongs to the methyltransferase superfamily. PrmA family.

It is found in the cytoplasm. The enzyme catalyses L-lysyl-[protein] + 3 S-adenosyl-L-methionine = N(6),N(6),N(6)-trimethyl-L-lysyl-[protein] + 3 S-adenosyl-L-homocysteine + 3 H(+). In terms of biological role, methylates ribosomal protein L11. This is Ribosomal protein L11 methyltransferase from Streptococcus pyogenes serotype M12 (strain MGAS2096).